A 789-amino-acid chain; its full sequence is Homocitrate dehydratase, mitochondrial (789 aa).

The transit peptide at 1 to 14 (MLSSANRFYIKRHL) directs the protein to the mitochondrion. Substrate-binding positions include Gln-96 and 189 to 191 (DSH). [4Fe-4S] cluster contacts are provided by Cys-385, Cys-448, and Cys-451. Residues Arg-476, Arg-481, Lys-610, and 672–673 (AR) contribute to the substrate site.

Belongs to the aconitase/IPM isomerase family. Requires [4Fe-4S] cluster as cofactor.

It is found in the mitochondrion. It carries out the reaction (2R)-homocitrate = cis-homoaconitate + H2O. It participates in amino-acid biosynthesis; L-lysine biosynthesis via AAA pathway; L-alpha-aminoadipate from 2-oxoglutarate: step 2/5. Functionally, catalyzes the reversible dehydration of (R)-homocitrate to cis-homoaconitate, a step in the alpha-aminoadipate pathway for lysine biosynthesis. This is Homocitrate dehydratase, mitochondrial (ACO2) from Saccharomyces cerevisiae (strain ATCC 204508 / S288c) (Baker's yeast).